We begin with the raw amino-acid sequence, 59 residues long: Large ribosomal subunit protein uL30 (59 aa).

Belongs to the universal ribosomal protein uL30 family. As to quaternary structure, part of the 50S ribosomal subunit.

The polypeptide is Large ribosomal subunit protein uL30 (Sodalis glossinidius (strain morsitans)).